The sequence spans 314 residues: MSHSNNFYRLETRLQSQTGKAIGDFGMIEDGDTVLVCMSGGKDSYTMLSVLMALQKRAPIKFKLIAMNLDQKQPGFPEHILPEYLKSVGVEYVIVEADTYSIVKEKVPEGKTTCSLCSRLRRGVIYRTAKELGANKIALGHHRDDIVQTFFLNMFFGGKMKAMPPKLSTDDGQHIVIRPLAYCSEKDIASYARAMEFPIIPCNLCGSQENLQRKKVSEMLQDWERQNPGRIDNIFSALRNVVPSHLADTDLFPFTGLATGLAKVDEASLFGETTFQQQPLMFAGNVEENRMEFVRFERPPAAAAAPAAEQAGTQ.

A PP-loop motif motif is present at residues 39–44 (SGGKDS). The [4Fe-4S] cluster site is built by C114, C117, and C205.

It belongs to the TtcA family. As to quaternary structure, homodimer. Requires Mg(2+) as cofactor. [4Fe-4S] cluster serves as cofactor.

The protein resides in the cytoplasm. It catalyses the reaction cytidine(32) in tRNA + S-sulfanyl-L-cysteinyl-[cysteine desulfurase] + AH2 + ATP = 2-thiocytidine(32) in tRNA + L-cysteinyl-[cysteine desulfurase] + A + AMP + diphosphate + H(+). Its pathway is tRNA modification. Catalyzes the ATP-dependent 2-thiolation of cytidine in position 32 of tRNA, to form 2-thiocytidine (s(2)C32). The sulfur atoms are provided by the cysteine/cysteine desulfurase (IscS) system. This chain is tRNA-cytidine(32) 2-sulfurtransferase, found in Cupriavidus necator (strain ATCC 17699 / DSM 428 / KCTC 22496 / NCIMB 10442 / H16 / Stanier 337) (Ralstonia eutropha).